A 293-amino-acid chain; its full sequence is Aminodeoxychorismate lyase (293 aa).

Residue K146 is modified to N6-(pyridoxal phosphate)lysine.

This sequence belongs to the class-IV pyridoxal-phosphate-dependent aminotransferase family. As to quaternary structure, homodimer. The cofactor is pyridoxal 5'-phosphate.

It carries out the reaction 4-amino-4-deoxychorismate = 4-aminobenzoate + pyruvate + H(+). The protein operates within cofactor biosynthesis; tetrahydrofolate biosynthesis; 4-aminobenzoate from chorismate: step 2/2. In terms of biological role, involved in the biosynthesis of p-aminobenzoate (PABA), a precursor of tetrahydrofolate. Converts 4-amino-4-deoxychorismate into 4-aminobenzoate (PABA) and pyruvate. In Bacillus subtilis (strain 168), this protein is Aminodeoxychorismate lyase.